Consider the following 1534-residue polypeptide: DNA-directed RNA polymerase subunit beta'' (1534 aa).

Residues cysteine 220, cysteine 296, cysteine 303, and cysteine 306 each coordinate Zn(2+). 2 stretches are compositionally biased toward basic and acidic residues: residues 644 to 668 (RTQE…RTRE) and 678 to 688 (PENKYRTREGE). Disordered regions lie at residues 644–698 (RTQE…EDEY) and 719–800 (YRTL…KKEG). Composition is skewed to acidic residues over residues 744 to 762 (GEYE…SSED) and 770 to 789 (TLEE…EYGS).

Belongs to the RNA polymerase beta' chain family. RpoC2 subfamily. In plastids the minimal PEP RNA polymerase catalytic core is composed of four subunits: alpha, beta, beta', and beta''. When a (nuclear-encoded) sigma factor is associated with the core the holoenzyme is formed, which can initiate transcription. Requires Zn(2+) as cofactor.

It localises to the plastid. Its subcellular location is the chloroplast. The catalysed reaction is RNA(n) + a ribonucleoside 5'-triphosphate = RNA(n+1) + diphosphate. DNA-dependent RNA polymerase catalyzes the transcription of DNA into RNA using the four ribonucleoside triphosphates as substrates. This Saccharum officinarum (Sugarcane) protein is DNA-directed RNA polymerase subunit beta''.